A 473-amino-acid polypeptide reads, in one-letter code: Photosystem II CP43 reaction center protein (473 aa).

Positions 1–14 (MKTLYSLRRFYPVE) are excised as a propeptide. Residue T15 is modified to N-acetylthreonine. T15 bears the Phosphothreonine mark. The next 5 membrane-spanning stretches (helical) occupy residues 69–93 (LFEV…PHLA), 134–155 (LLGP…KDRN), 178–200 (KALY…RKIT), 255–275 (KPFA…LSYS), and 291–312 (WFNN…ASQA). E367 is a [CaMn4O5] cluster binding site. Residues 447 to 471 (RARAAAAGFEKGIDRDFEPVLSMTP) form a helical membrane-spanning segment.

Belongs to the PsbB/PsbC family. PsbC subfamily. PSII is composed of 1 copy each of membrane proteins PsbA, PsbB, PsbC, PsbD, PsbE, PsbF, PsbH, PsbI, PsbJ, PsbK, PsbL, PsbM, PsbT, PsbX, PsbY, PsbZ, Psb30/Ycf12, at least 3 peripheral proteins of the oxygen-evolving complex and a large number of cofactors. It forms dimeric complexes. Requires Binds multiple chlorophylls and provides some of the ligands for the Ca-4Mn-5O cluster of the oxygen-evolving complex. It may also provide a ligand for a Cl- that is required for oxygen evolution. PSII binds additional chlorophylls, carotenoids and specific lipids. as cofactor.

The protein resides in the plastid. Its subcellular location is the chloroplast thylakoid membrane. In terms of biological role, one of the components of the core complex of photosystem II (PSII). It binds chlorophyll and helps catalyze the primary light-induced photochemical processes of PSII. PSII is a light-driven water:plastoquinone oxidoreductase, using light energy to abstract electrons from H(2)O, generating O(2) and a proton gradient subsequently used for ATP formation. In Liriodendron tulipifera (Tuliptree), this protein is Photosystem II CP43 reaction center protein.